We begin with the raw amino-acid sequence, 405 residues long: Protein NCA1 (405 aa).

The segment at 1-85 (MTTTSVCPFS…GNLNKDSTDS (85 aa)) is disordered. Composition is skewed to basic and acidic residues over residues 13–24 (ARPDDGSTRKQG) and 37–48 (ARPDDASARKQG). The span at 76 to 85 (GNLNKDSTDS) shows a compositional bias: polar residues. An RING-type zinc finger spans residues 108-142 (CMLCQALLYESSRCVPCTHVFCKVCLTRFKDCPLC). TPR repeat units lie at residues 247-280 (GAVL…LMKL) and 292-325 (SVSL…RRDA).

Interacts with the catalases CAT1, CAT2 and CAT3. This interaction is not induced by alkaline stress or H(2)O(2) and NaCl treatments. As to expression, expressed in roots, stems, leaves, flowers and siliques.

The protein resides in the cytoplasm. Its subcellular location is the nucleus. Functionally, has holdase chaperone activity that may fold catalase to a functional structure. Not required for the peroxisome import of catalases. Required for the activity of catalases and acts mainly at the post-transcriptional level. The sequence is that of Protein NCA1 from Arabidopsis thaliana (Mouse-ear cress).